Consider the following 1234-residue polypeptide: ATP-dependent helicase/nuclease subunit A (1234 aa).

A UvrD-like helicase ATP-binding domain is found at 9–482 (STWTDDQWEA…IDLNKNFRSR (474 aa)). 30-37 (AAAGSGKT) is a binding site for ATP. One can recognise a UvrD-like helicase C-terminal domain in the interval 509–800 (QAELKLGASY…RMMTIHSSKG (292 aa)).

It belongs to the helicase family. AddA subfamily. As to quaternary structure, heterodimer of AddA and AddB/RexB. Mg(2+) is required as a cofactor.

It catalyses the reaction Couples ATP hydrolysis with the unwinding of duplex DNA by translocating in the 3'-5' direction.. The enzyme catalyses ATP + H2O = ADP + phosphate + H(+). The heterodimer acts as both an ATP-dependent DNA helicase and an ATP-dependent, dual-direction single-stranded exonuclease. Recognizes the chi site generating a DNA molecule suitable for the initiation of homologous recombination. The AddA nuclease domain is required for chi fragment generation; this subunit has the helicase and 3' -&gt; 5' nuclease activities. The protein is ATP-dependent helicase/nuclease subunit A of Bacillus pumilus (strain SAFR-032).